Reading from the N-terminus, the 152-residue chain is MANLERTFIAIKPDGVQRGLVGEIIKRFEQKGFRLVAMKFLRASEEHLKQHYIDLKDRPFFPGLVKYMNSGPVVAMVWEGLNVVKTGRVMLGETNPADSKPGTIRGDFCIQVGRNIIHGSDSVESAEKEIGLWFKPEELIDYKSCAHDWVYE.

The interaction with AKAP13 stretch occupies residues 1–66 (MANLERTFIA…DRPFFPGLVK (66 aa)). ATP-binding residues include Lys-12, Phe-60, Arg-88, Thr-94, Arg-105, and Asn-115. His-118 serves as the catalytic Pros-phosphohistidine intermediate.

It belongs to the NDK family. As to quaternary structure, hexamer of two different chains: An and B (A6, A5B, A4B2, A3B3, A2B4, AB5, B6). Interacts with CAPN8. Interacts with AKAP13. Interacts with ITGB1BP1 (via C-terminal domain region). Interacts with BCL2L10. The cofactor is Mg(2+). Post-translationally, the N-terminus is blocked.

The protein resides in the cytoplasm. It localises to the cell projection. It is found in the lamellipodium. The protein localises to the ruffle. Its subcellular location is the nucleus. It carries out the reaction a 2'-deoxyribonucleoside 5'-diphosphate + ATP = a 2'-deoxyribonucleoside 5'-triphosphate + ADP. It catalyses the reaction a ribonucleoside 5'-diphosphate + ATP = a ribonucleoside 5'-triphosphate + ADP. The enzyme catalyses ATP + protein L-histidine = ADP + protein N-phospho-L-histidine.. Functionally, major role in the synthesis of nucleoside triphosphates other than ATP. The ATP gamma phosphate is transferred to the NDP beta phosphate via a ping-pong mechanism, using a phosphorylated active-site intermediate. Negatively regulates Rho activity by interacting with AKAP13/LBC. Acts as a transcriptional activator of the MYC gene; binds DNA non-specifically. Binds to both single-stranded guanine- and cytosine-rich strands within the nuclease hypersensitive element (NHE) III(1) region of the MYC gene promoter. Does not bind to duplex NHE III(1). Has G-quadruplex (G4) DNA-binding activity, which is independent of its nucleotide-binding and kinase activity. Binds both folded and unfolded G4 with similar low nanomolar affinities. Stabilizes folded G4s regardless of whether they are prefolded or not. Exhibits histidine protein kinase activity. In Rattus norvegicus (Rat), this protein is Nucleoside diphosphate kinase B (Nme2).